A 136-amino-acid chain; its full sequence is Succinate dehydrogenase assembly factor 3, mitochondrial (136 aa).

The N-terminal 24 residues, 1-24 (MRASMVRRMAAAASSSASSSLRPA), are a transit peptide targeting the mitochondrion.

Belongs to the complex I LYR family. SDHAF3 subfamily. In terms of assembly, interacts with the iron-sulfur protein subunit within the SDH catalytic dimer.

The protein resides in the mitochondrion matrix. In terms of biological role, plays an essential role in the assembly of succinate dehydrogenase (SDH), an enzyme complex (also referred to as respiratory complex II) that is a component of both the tricarboxylic acid (TCA) cycle and the mitochondrial electron transport chain, and which couples the oxidation of succinate to fumarate with the reduction of ubiquinone (coenzyme Q) to ubiquinol. Promotes maturation of the iron-sulfur protein subunit of the SDH catalytic dimer, protecting it from the deleterious effects of oxidants. May act together with SDHAF1. This is Succinate dehydrogenase assembly factor 3, mitochondrial from Pyricularia oryzae (strain 70-15 / ATCC MYA-4617 / FGSC 8958) (Rice blast fungus).